The sequence spans 382 residues: UDP-N-acetylglucosamine--N-acetylmuramyl-(pentapeptide) pyrophosphoryl-undecaprenol N-acetylglucosamine transferase (382 aa).

Residues 11 to 13 (TGG), Asn-124, Arg-165, Ser-200, Ile-254, and Gln-299 each bind UDP-N-acetyl-alpha-D-glucosamine.

Belongs to the glycosyltransferase 28 family. MurG subfamily.

The protein resides in the cell inner membrane. The enzyme catalyses di-trans,octa-cis-undecaprenyl diphospho-N-acetyl-alpha-D-muramoyl-L-alanyl-D-glutamyl-meso-2,6-diaminopimeloyl-D-alanyl-D-alanine + UDP-N-acetyl-alpha-D-glucosamine = di-trans,octa-cis-undecaprenyl diphospho-[N-acetyl-alpha-D-glucosaminyl-(1-&gt;4)]-N-acetyl-alpha-D-muramoyl-L-alanyl-D-glutamyl-meso-2,6-diaminopimeloyl-D-alanyl-D-alanine + UDP + H(+). It functions in the pathway cell wall biogenesis; peptidoglycan biosynthesis. Its function is as follows. Cell wall formation. Catalyzes the transfer of a GlcNAc subunit on undecaprenyl-pyrophosphoryl-MurNAc-pentapeptide (lipid intermediate I) to form undecaprenyl-pyrophosphoryl-MurNAc-(pentapeptide)GlcNAc (lipid intermediate II). This is UDP-N-acetylglucosamine--N-acetylmuramyl-(pentapeptide) pyrophosphoryl-undecaprenol N-acetylglucosamine transferase from Nitratidesulfovibrio vulgaris (strain DSM 19637 / Miyazaki F) (Desulfovibrio vulgaris).